The chain runs to 147 residues: Spermidine export protein MdtJ (147 aa).

The next 4 membrane-spanning stretches (helical) occupy residues 1–21, 31–51, 54–74, and 81–101; these read MIYW…TLSM, TGHI…SLAV, VALG…ITIF, and ETLS…ILLV. A compositionally biased stretch (basic residues) spans 105-117; it reads TRKPKQPNRHRGN. The segment at 105–147 is disordered; sequence TRKPKQPNRHRGNRPPSVQGLKTQTTGHHKGVAVESGEHHAAA.

The protein belongs to the drug/metabolite transporter (DMT) superfamily. Small multidrug resistance (SMR) (TC 2.A.7.1) family. MdtJ subfamily. As to quaternary structure, forms a complex with MdtI.

The protein localises to the cell inner membrane. Catalyzes the excretion of spermidine. This Yersinia pseudotuberculosis serotype O:3 (strain YPIII) protein is Spermidine export protein MdtJ.